Here is a 363-residue protein sequence, read N- to C-terminus: Protein RecA (363 aa).

79–86 (GPESSGKT) contacts ATP.

Belongs to the RecA family.

It localises to the cytoplasm. Can catalyze the hydrolysis of ATP in the presence of single-stranded DNA, the ATP-dependent uptake of single-stranded DNA by duplex DNA, and the ATP-dependent hybridization of homologous single-stranded DNAs. It interacts with LexA causing its activation and leading to its autocatalytic cleavage. The chain is Protein RecA from Methylobacterium sp. (strain 4-46).